Consider the following 569-residue polypeptide: 2-succinyl-5-enolpyruvyl-6-hydroxy-3-cyclohexene-1-carboxylate synthase (569 aa).

Belongs to the TPP enzyme family. MenD subfamily. Homodimer. Requires Mg(2+) as cofactor. Mn(2+) serves as cofactor. The cofactor is thiamine diphosphate.

The enzyme catalyses isochorismate + 2-oxoglutarate + H(+) = 5-enolpyruvoyl-6-hydroxy-2-succinyl-cyclohex-3-ene-1-carboxylate + CO2. Its pathway is quinol/quinone metabolism; 1,4-dihydroxy-2-naphthoate biosynthesis; 1,4-dihydroxy-2-naphthoate from chorismate: step 2/7. The protein operates within quinol/quinone metabolism; menaquinone biosynthesis. In terms of biological role, catalyzes the thiamine diphosphate-dependent decarboxylation of 2-oxoglutarate and the subsequent addition of the resulting succinic semialdehyde-thiamine pyrophosphate anion to isochorismate to yield 2-succinyl-5-enolpyruvyl-6-hydroxy-3-cyclohexene-1-carboxylate (SEPHCHC). The polypeptide is 2-succinyl-5-enolpyruvyl-6-hydroxy-3-cyclohexene-1-carboxylate synthase (Haemophilus ducreyi (strain 35000HP / ATCC 700724)).